The sequence spans 393 residues: Chalcone synthase 2 (393 aa).

The active site involves cysteine 166.

It belongs to the thiolase-like superfamily. Chalcone/stilbene synthases family.

The catalysed reaction is (E)-4-coumaroyl-CoA + 3 malonyl-CoA + 3 H(+) = 2',4,4',6'-tetrahydroxychalcone + 3 CO2 + 4 CoA. It functions in the pathway secondary metabolite biosynthesis; flavonoid biosynthesis. The primary product of this enzyme is 4,2',4',6'-tetrahydroxychalcone (also termed naringenin-chalcone or chalcone) which can under specific conditions spontaneously isomerize into naringenin. The sequence is that of Chalcone synthase 2 (CHS2) from Ruta graveolens (Common rue).